Consider the following 227-residue polypeptide: Enolase-phosphatase E1 (227 aa).

Aspartate 11 and glutamate 13 together coordinate Mg(2+). Residues serine 118 to serine 119 and lysine 161 each bind substrate. Position 186 (aspartate 186) interacts with Mg(2+).

The protein belongs to the HAD-like hydrolase superfamily. MasA/MtnC family. Monomer. It depends on Mg(2+) as a cofactor.

It is found in the cytoplasm. The protein resides in the nucleus. The enzyme catalyses 5-methylsulfanyl-2,3-dioxopentyl phosphate + H2O = 1,2-dihydroxy-5-(methylsulfanyl)pent-1-en-3-one + phosphate. It participates in amino-acid biosynthesis; L-methionine biosynthesis via salvage pathway; L-methionine from S-methyl-5-thio-alpha-D-ribose 1-phosphate: step 3/6. Its pathway is amino-acid biosynthesis; L-methionine biosynthesis via salvage pathway; L-methionine from S-methyl-5-thio-alpha-D-ribose 1-phosphate: step 4/6. Bifunctional enzyme that catalyzes the enolization of 2,3-diketo-5-methylthiopentyl-1-phosphate (DK-MTP-1-P) into the intermediate 2-hydroxy-3-keto-5-methylthiopentenyl-1-phosphate (HK-MTPenyl-1-P), which is then dephosphorylated to form the acireductone 1,2-dihydroxy-3-keto-5-methylthiopentene (DHK-MTPene). This Saccharomyces cerevisiae (strain YJM789) (Baker's yeast) protein is Enolase-phosphatase E1.